The chain runs to 343 residues: Thromboxane A2 receptor (343 aa).

Over 1-29 (MWPNASSLGPCFRPMNITLEERRLIASPW) the chain is Extracellular. N-linked (GlcNAc...) asparagine glycans are attached at residues Asn4 and Asn16. Residues 30–52 (FAASFCLVGLASNLLALSVLMGA) form a helical membrane-spanning segment. Topologically, residues 53 to 66 (RQGSSQSRSSFLTF) are cytoplasmic. Residues 67-87 (LCGLVLTDFMGLLVTGAIVVT) form a helical membrane-spanning segment. Residues 88–106 (QHFVLFEWQAVDPGCSLCH) lie on the Extracellular side of the membrane. Cys105 and Cys183 form a disulfide bridge. A helical transmembrane segment spans residues 107-128 (FMGVIMVFFGLCPLLLGAAMAS). Topologically, residues 129 to 149 (ERFLGITRPFSRPATASQRRA) are cytoplasmic. The chain crosses the membrane as a helical span at residues 150 to 172 (WTTVGLVWASALALGLLPLLGVG). The Extracellular portion of the chain corresponds to 173-193 (HYTVQYPGSWCFLTLGTDPGD). A helical membrane pass occupies residues 194–219 (VAFGLLFALLGSISVGMSFLLNTISV). The Cytoplasmic segment spans residues 220 to 246 (ATLCHVYHGQATAQQRPRDCEVEMMVQ). Residues 247–270 (LMGIMVVASICWMPLLVFIAQTVL) form a helical membrane-spanning segment. Topologically, residues 271-289 (QSPPAMSPTGQLSRLTERQ) are extracellular. Residues 290–311 (LLIYLRVATWNQILDPWVYILF) form a helical membrane-spanning segment. The Cytoplasmic portion of the chain corresponds to 312 to 343 (RRAVIQRFYPRLSTRSRSLSLQPQLTRRSTIH). Ser329 and Ser331 each carry phosphoserine.

The protein belongs to the G-protein coupled receptor 1 family. In terms of assembly, interacts with RPGRIP1L. Interacts with RACK1; the interaction regulates TBXA2R cell surface expression.

It is found in the cell membrane. Receptor for thromboxane A2 (TXA2), a potent stimulator of platelet aggregation. The activity of this receptor is mediated by a G-protein that activates a phosphatidylinositol-calcium second messenger system. In the kidney, the binding of TXA2 to glomerular TP receptors causes intense vasoconstriction. Activates phospholipase C and adenylyl cyclase. This chain is Thromboxane A2 receptor (TBXA2R), found in Bos taurus (Bovine).